A 110-amino-acid chain; its full sequence is Large ribosomal subunit protein bL20 (110 aa).

The protein belongs to the bacterial ribosomal protein bL20 family.

Its function is as follows. Binds directly to 23S ribosomal RNA and is necessary for the in vitro assembly process of the 50S ribosomal subunit. It is not involved in the protein synthesizing functions of that subunit. The chain is Large ribosomal subunit protein bL20 from Shigella boydii serotype 4 (strain Sb227).